A 357-amino-acid chain; its full sequence is Protein FAM118A (357 aa).

M1 carries the N-acetylmethionine modification. The chain crosses the membrane as a helical span at residues 30–50; it reads LLLVIGTGVSAAVAPGIPALC. S311 carries the phosphoserine modification.

Belongs to the FAM118 family.

It localises to the membrane. The polypeptide is Protein FAM118A (FAM118A) (Homo sapiens (Human)).